A 437-amino-acid chain; its full sequence is Serine carboxypeptidase-like 10 (437 aa).

Residues 1 to 21 (MGSTLKHLLLLLLVLIRHVDS) form the signal peptide. 3 disulfide bridges follow: Cys-80–Cys-327, Cys-243–Cys-257, and Cys-281–Cys-293. N-linked (GlcNAc...) asparagine glycosylation is present at Asn-101. Residue Ser-175 is part of the active site. N-linked (GlcNAc...) asparagine glycosylation occurs at Asn-328. Asp-362 is a catalytic residue. Asn-378 carries N-linked (GlcNAc...) asparagine glycosylation. Residue His-415 is part of the active site. Residue Asn-422 is glycosylated (N-linked (GlcNAc...) asparagine).

Belongs to the peptidase S10 family. As to expression, expressed in senescent leaves.

The protein resides in the secreted. In terms of biological role, involved in the biosynthesis of sinapoylated anthocyanins. The protein is Serine carboxypeptidase-like 10 (SCPL10) of Arabidopsis thaliana (Mouse-ear cress).